A 420-amino-acid chain; its full sequence is Hemocyanin 2-c chain (420 aa).

The segment covering 1–12 (DFGHSKKIRKNV) has biased composition (basic residues). The interval 1 to 20 (DFGHSKKIRKNVHSLTAEEQ) is disordered. His-46 contributes to the Cu cation binding site. The cysteines at positions 52 and 63 are disulfide-linked. Cu cation-binding residues include His-66, His-73, His-185, His-189, and His-216. Cystine bridges form between Cys-175/Cys-242 and Cys-335/Cys-342.

Post-translationally, O-glycosylated. Hemolymph.

Its subcellular location is the secreted. It is found in the extracellular space. Its function is as follows. Hemocyanins are copper-containing oxygen carriers occurring freely dissolved in the hemolymph of many mollusks and arthropods. In Megathura crenulata (Giant keyhole limpet), this protein is Hemocyanin 2-c chain.